The following is a 431-amino-acid chain: Histidine--tRNA ligase (431 aa).

The protein belongs to the class-II aminoacyl-tRNA synthetase family.

Its subcellular location is the cytoplasm. It carries out the reaction tRNA(His) + L-histidine + ATP = L-histidyl-tRNA(His) + AMP + diphosphate + H(+). The sequence is that of Histidine--tRNA ligase (hisS) from Pyrococcus abyssi (strain GE5 / Orsay).